A 382-amino-acid chain; its full sequence is Galactokinase (382 aa).

34 to 37 serves as a coordination point for substrate; sequence EHTD. Position 124-130 (124-130) interacts with ATP; sequence GAGLSSS. Mg(2+)-binding residues include Ser130 and Glu162. Catalysis depends on Asp174, which acts as the Proton acceptor. Tyr223 lines the substrate pocket.

It belongs to the GHMP kinase family. GalK subfamily.

Its subcellular location is the cytoplasm. It catalyses the reaction alpha-D-galactose + ATP = alpha-D-galactose 1-phosphate + ADP + H(+). It participates in carbohydrate metabolism; galactose metabolism. Its function is as follows. Catalyzes the transfer of the gamma-phosphate of ATP to D-galactose to form alpha-D-galactose-1-phosphate (Gal-1-P). The protein is Galactokinase of Shigella dysenteriae serotype 1 (strain Sd197).